The sequence spans 411 residues: NADH-quinone oxidoreductase subunit H (411 aa).

Transmembrane regions (helical) follow at residues 18–38, 84–104, 124–144, 165–185, 198–218, 260–280, 288–308, 321–341, and 352–372; these read LAKS…AILI, WIYL…FAVI, LPVA…GIVL, VISY…YAGT, TWYI…MVGE, VSAL…PISI, WWPL…FMWL, MALG…IVAI, and APAT…ALLG.

The protein belongs to the complex I subunit 1 family. In terms of assembly, NDH-1 is composed of 14 different subunits. Subunits NuoA, H, J, K, L, M, N constitute the membrane sector of the complex.

It localises to the cell membrane. The enzyme catalyses a quinone + NADH + 5 H(+)(in) = a quinol + NAD(+) + 4 H(+)(out). NDH-1 shuttles electrons from NADH, via FMN and iron-sulfur (Fe-S) centers, to quinones in the respiratory chain. The immediate electron acceptor for the enzyme in this species is believed to be menaquinone. Couples the redox reaction to proton translocation (for every two electrons transferred, four hydrogen ions are translocated across the cytoplasmic membrane), and thus conserves the redox energy in a proton gradient. This subunit may bind ubiquinone. The polypeptide is NADH-quinone oxidoreductase subunit H (Mycolicibacterium vanbaalenii (strain DSM 7251 / JCM 13017 / BCRC 16820 / KCTC 9966 / NRRL B-24157 / PYR-1) (Mycobacterium vanbaalenii)).